The following is a 118-amino-acid chain: NADH-ubiquinone oxidoreductase chain 3 (118 aa).

A run of 3 helical transmembrane segments spans residues 6-26 (IFVYLVISLLLSLILIGVSFL), 62-82 (LVSILFIIFDLEVTFLFPWAV), and 87-107 (IGLFGFWSMMVFLFILTIGFV).

Belongs to the complex I subunit 3 family.

It localises to the mitochondrion membrane. The catalysed reaction is a ubiquinone + NADH + 5 H(+)(in) = a ubiquinol + NAD(+) + 4 H(+)(out). Functionally, core subunit of the mitochondrial membrane respiratory chain NADH dehydrogenase (Complex I) that is believed to belong to the minimal assembly required for catalysis. Complex I functions in the transfer of electrons from NADH to the respiratory chain. The immediate electron acceptor for the enzyme is believed to be ubiquinone. The polypeptide is NADH-ubiquinone oxidoreductase chain 3 (ND3) (Marchantia polymorpha (Common liverwort)).